The sequence spans 181 residues: Peptidyl-tRNA hydrolase (181 aa).

Y14 serves as a coordination point for tRNA. H19 functions as the Proton acceptor in the catalytic mechanism. The tRNA site is built by F60, N62, and N106.

This sequence belongs to the PTH family. Monomer.

It localises to the cytoplasm. The catalysed reaction is an N-acyl-L-alpha-aminoacyl-tRNA + H2O = an N-acyl-L-amino acid + a tRNA + H(+). Its function is as follows. Hydrolyzes ribosome-free peptidyl-tRNAs (with 1 or more amino acids incorporated), which drop off the ribosome during protein synthesis, or as a result of ribosome stalling. Functionally, catalyzes the release of premature peptidyl moieties from peptidyl-tRNA molecules trapped in stalled 50S ribosomal subunits, and thus maintains levels of free tRNAs and 50S ribosomes. The sequence is that of Peptidyl-tRNA hydrolase from Campylobacter curvus (strain 525.92).